The chain runs to 790 residues: Nitrogen permease reactivator protein (790 aa).

The interval Met-1 to Pro-68 is disordered. Positions Thr-16–Asp-38 are enriched in polar residues. Residues Ser-46–Ser-58 show a composition bias toward low complexity. Ser-47 bears the Phosphoserine; by autocatalysis mark. Ser-85, Ser-90, Ser-100, Ser-111, Ser-116, Ser-125, Ser-137, and Ser-141 each carry phosphoserine. Polar residues predominate over residues Arg-151 to Pro-175. 2 disordered regions span residues Arg-151–Ser-188 and Leu-234–Phe-258. Positions Asn-176–Ser-188 are enriched in low complexity. Positions Ser-238 to Gln-248 are enriched in polar residues. Positions Ser-249 to Phe-258 are enriched in low complexity. Ser-257 carries the post-translational modification Phosphoserine; by autocatalysis. Ser-259, Ser-260, Ser-288, Ser-292, Ser-317, Ser-320, and Ser-328 each carry phosphoserine. Over residues Asn-276–Asn-289 the composition is skewed to low complexity. The segment at Asn-276–Ser-357 is disordered. 3 stretches are compositionally biased toward polar residues: residues Gly-290 to Thr-305, Arg-314 to Ser-339, and Pro-346 to Ser-357. Tyr-334 bears the Phosphotyrosine mark. A phosphoserine mark is found at Ser-336, Ser-353, and Ser-356. Residue Ser-357 is modified to Phosphoserine; by autocatalysis. Ser-385 is modified (phosphoserine). Positions Ile-438–Ile-742 constitute a Protein kinase domain. Residues Leu-444–Val-452 and Lys-467 each bind ATP. Asp-561 serves as the catalytic Proton acceptor. 2 disordered regions span residues Leu-666–Pro-704 and His-766–Gln-790. Positions Asp-677–Glu-688 are enriched in basic and acidic residues. A compositionally biased stretch (low complexity) spans Ser-689–Asn-701.

This sequence belongs to the protein kinase superfamily. Ser/Thr protein kinase family. Interacts with TIP41. In terms of processing, hyperphosphorylated in nitrogen-rich growth medium. Nitrogen limitation (or rapamycin treatment) leads to substantial, though not complete dephosphorylation. Autophosphorylation plays only a minor role and seems not to be regulated by the quality of the nitrogen source.

Its subcellular location is the cytoplasm. It carries out the reaction L-seryl-[protein] + ATP = O-phospho-L-seryl-[protein] + ADP + H(+). The enzyme catalyses L-threonyl-[protein] + ATP = O-phospho-L-threonyl-[protein] + ADP + H(+). Dephosphorylation by SIT4 activates NPR1 kinase activity. Functionally, nutrient-regulated protein kinase that promotes the activity of at least 6 distinct transport systems for nitrogenous nutrients under conditions of nitrogen catabolite derepression. Under poor nitrogen growth conditions, required for post-Golgi sorting of the general amino acid permease GAP1 and the three known ammonia permeases, MEP1/2/3, to the plasma membrane. Also contributes to the stability and the retention of GAP1 at the plasma membrane. Inversely, promotes the degradation of tryptophan permease TAT2 under the same conditions. Activity is regulated by the TOR signaling pathway via phosphatase SIT4. Although thought to be involved in regulation of GLN3-dependent transcription by nitrogen catabolite repression, this seems to be an indirect effect from the reduced uptake of the nitrogen-repressing compound. The protein is Nitrogen permease reactivator protein (NPR1) of Saccharomyces cerevisiae (strain ATCC 204508 / S288c) (Baker's yeast).